A 443-amino-acid polypeptide reads, in one-letter code: Dynein regulatory complex protein 9 (443 aa).

Disordered stretches follow at residues methionine 1–glutamate 34 and glycine 415–lysine 443. The IQ domain maps to glutamate 393–lysine 422. Basic and acidic residues predominate over residues glycine 415–glycine 430. Basic residues predominate over residues lysine 431–lysine 443.

Belongs to the DRC9 family. As to quaternary structure, component of the nexin-dynein regulatory complex (N-DRC). Interacts (via IQ domain) with CALM when calcium levels are low. Does not interact with CALM in the presence of Ca(2+). Interacts with the HSP70 proteins HSPA1L and HSPA8. May form a complex with CAMK4 and HSP70.

The protein resides in the cytoplasm. The protein localises to the cell projection. Its subcellular location is the cilium. It is found in the flagellum. It localises to the cytoskeleton. The protein resides in the flagellum axoneme. Functionally, component of the nexin-dynein regulatory complex (N-DRC), a key regulator of ciliary/flagellar motility which maintains the alignment and integrity of the distal axoneme and regulates microtubule sliding in motile axonemes. Binds calmodulin when cellular Ca(2+) levels are low and thereby contributes to the regulation of calcium and calmodulin-dependent protein kinase IV (CAMK4) activity; contributes to the regulation of CAMK4 signaling cascades. Required for normal axoneme assembly in sperm flagella, normal sperm tail formation and for male fertility. The sequence is that of Dynein regulatory complex protein 9 (IQCG) from Homo sapiens (Human).